The primary structure comprises 405 residues: Acetate kinase (405 aa).

Mg(2+) is bound at residue Asn-7. An ATP-binding site is contributed by Lys-14. Arg-98 is a binding site for substrate. The Proton donor/acceptor role is filled by Asp-155. Residues 215–219, 289–291, and 337–341 each bind ATP; these read HLGNG, DMR, and GIGEN. Glu-391 is a Mg(2+) binding site.

This sequence belongs to the acetokinase family. In terms of assembly, homodimer. The cofactor is Mg(2+). It depends on Mn(2+) as a cofactor.

The protein localises to the cytoplasm. The enzyme catalyses acetate + ATP = acetyl phosphate + ADP. It functions in the pathway metabolic intermediate biosynthesis; acetyl-CoA biosynthesis; acetyl-CoA from acetate: step 1/2. Its function is as follows. Catalyzes the formation of acetyl phosphate from acetate and ATP. Can also catalyze the reverse reaction. The chain is Acetate kinase from Desulfotalea psychrophila (strain LSv54 / DSM 12343).